A 92-amino-acid polypeptide reads, in one-letter code: Ig kappa chain V region 3381 (92 aa).

The tract at residues 1-23 is framework-1; that stretch reads AFELTQTPASVEAAVGGTVTINC. Residues 24-34 are complementarity-determining-1; the sequence is QASESISNWLA. The segment at 35 to 49 is framework-2; that stretch reads WYQQKPGQPXKLLIY. The interval 50-56 is complementarity-determining-2; that stretch reads KASTLAS. The interval 57 to 88 is framework-3; it reads GVSSRFKGSGSGTQFTLTISDLECADAATYYC. A complementarity-determining-3 region spans residues 89 to 92; that stretch reads QSTD.

In Oryctolagus cuniculus (Rabbit), this protein is Ig kappa chain V region 3381.